The sequence spans 214 residues: Large ribosomal subunit protein bL25 (214 aa).

Positions V178–E214 are disordered. Positions E179–E214 are enriched in acidic residues.

Belongs to the bacterial ribosomal protein bL25 family. CTC subfamily. Part of the 50S ribosomal subunit; part of the 5S rRNA/L5/L18/L25 subcomplex. Contacts the 5S rRNA. Binds to the 5S rRNA independently of L5 and L18.

This is one of the proteins that binds to the 5S RNA in the ribosome where it forms part of the central protuberance. This Corynebacterium jeikeium (strain K411) protein is Large ribosomal subunit protein bL25.